We begin with the raw amino-acid sequence, 461 residues long: Phytase PHO112 (461 aa).

3 cysteine pairs are disulfide-bonded: cysteine 62–cysteine 384, cysteine 261–cysteine 274, and cysteine 404–cysteine 412. 1D-myo-inositol hexakisphosphate-binding residues include arginine 72, histidine 73, arginine 76, and serine 79. Histidine 73 serves as the catalytic Nucleophile. Asparagine 97 and asparagine 157 each carry an N-linked (GlcNAc...) asparagine glycan. Position 169 (arginine 169) interacts with 1D-myo-inositol hexakisphosphate. N-linked (GlcNAc...) asparagine glycosylation is found at asparagine 229 and asparagine 248. 1D-myo-inositol hexakisphosphate is bound at residue lysine 293. Residues asparagine 302 and asparagine 313 are each glycosylated (N-linked (GlcNAc...) asparagine). Residues histidine 334 and aspartate 335 each contribute to the 1D-myo-inositol hexakisphosphate site. Residues asparagine 437 and asparagine 452 are each glycosylated (N-linked (GlcNAc...) asparagine).

Belongs to the histidine acid phosphatase family. As to quaternary structure, monomer.

Its subcellular location is the secreted. The enzyme catalyses 1D-myo-inositol hexakisphosphate + H2O = 1D-myo-inositol 1,2,4,5,6-pentakisphosphate + phosphate. It catalyses the reaction 1D-myo-inositol 1,2,4,5,6-pentakisphosphate + H2O = 1D-myo-inositol 1,2,5,6-tetrakisphosphate + phosphate. It carries out the reaction 1D-myo-inositol 1,2,5,6-tetrakisphosphate + H2O = 1D-myo-inositol 1,2,6-trisphosphate + phosphate. The catalysed reaction is 1D-myo-inositol 1,2,6-trisphosphate + H2O = 1D-myo-inositol 1,2-bisphosphate + phosphate. The enzyme catalyses 1D-myo-inositol 1,2-bisphosphate + H2O = 1D-myo-inositol 2-phosphate + phosphate. Catalyzes the phosphate monoester hydrolysis of phytic acid (myo-inositol hexakisphosphate), which results in the stepwise formation of myo-inositol pentakis-, tetrakis-, tris-, bis-, and monophosphates, as well as the liberation of inorganic phosphate. Myo-inositol 2-monophosphate is the end product. Responsible of about 25% of the phytase activity. The residual phytase activity might be contributed by other cytosolic or cellular enzymes such as acid phosphatase that also degraded the substrate phytate. Is essential for human tissue damage during infection. This is Phytase PHO112 (PHO112) from Candida albicans (strain SC5314 / ATCC MYA-2876) (Yeast).